Reading from the N-terminus, the 363-residue chain is Fructose-1,6-bisphosphatase 1 (363 aa).

Val-2 bears the N-acetylvaline mark. AMP-binding positions include Val-18–Gly-22 and Thr-28–Thr-32. Mg(2+) contacts are provided by Asp-69 and Glu-98. Lys-113–Tyr-114 contributes to the AMP binding site. Residues Asp-119, Leu-121, and Asp-122 each coordinate Mg(2+). Substrate is bound at residue Asp-122–Ser-125. Arg-141 lines the AMP pocket. Lys-151 carries the N6-succinyllysine modification. Substrate is bound by residues Asn-213–Tyr-216, Arg-244–Met-249, Tyr-265, and Lys-275–Arg-277. Phosphotyrosine is present on residues Tyr-216, Tyr-245, and Tyr-265. Glu-281 is a Mg(2+) binding site. Phosphoserine occurs at positions 339 and 353.

Belongs to the FBPase class 1 family. In terms of assembly, homotetramer. Mg(2+) serves as cofactor.

It catalyses the reaction beta-D-fructose 1,6-bisphosphate + H2O = beta-D-fructose 6-phosphate + phosphate. It participates in carbohydrate biosynthesis; gluconeogenesis. Its activity is regulated as follows. Subject to complex allosteric regulation. The enzyme can assume an active R-state, or an inactive T-state. Intermediate conformations may exist. AMP acts as an allosteric inhibitor. AMP binding affects the turnover of bound substrate and not the affinity for substrate. Fructose 2,6-bisphosphate acts as a competitive inhibitor. Fructose 2,6-bisphosphate and AMP have synergistic effects. Its function is as follows. Catalyzes the hydrolysis of fructose 1,6-bisphosphate to fructose 6-phosphate in the presence of divalent cations, acting as a rate-limiting enzyme in gluconeogenesis. Plays a role in regulating glucose sensing and insulin secretion of pancreatic beta-cells. Appears to modulate glycerol gluconeogenesis in liver. Important regulator of appetite and adiposity; increased expression of the protein in liver after nutrient excess increases circulating satiety hormones and reduces appetite-stimulating neuropeptides and thus seems to provide a feedback mechanism to limit weight gain. This chain is Fructose-1,6-bisphosphatase 1 (Fbp1), found in Rattus norvegicus (Rat).